A 514-amino-acid chain; its full sequence is 5'-AMP-activated protein kinase subunit gamma-3 (514 aa).

Disordered stretches follow at residues 1–121 (MELA…FPKA) and 134–155 (DNPP…SDSN). Polar residues predominate over residues 59-71 (SRSWPSRAVTTSS). CBS domains follow at residues 222–283 (MATS…RSPL), 305–363 (CFKP…GTLL), and 380–440 (TFRD…HLDM). Residues arginine 250, 265 to 270 (MLTITD), valine 310, 331 to 332 (HR), and lysine 350 contribute to the ADP site. AMP is bound by residues arginine 250, 265-270 (MLTITD), valine 310, histidine 331, 331-332 (HR), lysine 350, threonine 380, alanine 385, 406-407 (SA), 422-425 (SRFD), arginine 449, leucine 457, histidine 478, 478-479 (HR), and 494-497 (SLSD). Residues arginine 250, 265–270 (MLTITD), valine 310, 331–332 (HR), arginine 332, and lysine 350 contribute to the ATP site. The AMPK pseudosubstrate motif lies at 318-339 (LFEAVYALIKNRIHRLPVLDPV). Residues 422–425 (SRFD), arginine 449, leucine 457, and 478–479 (HR) each bind ADP. ATP-binding positions include 422 to 425 (SRFD), arginine 449, leucine 457, and 478 to 479 (HR). The 60-residue stretch at 452–511 (CLEGVLSCQPHETLGEVIDRIVREQVHRLVLVDETQHLLGVVSLSDILQALVLSPAGIDA) folds into the CBS 4 domain.

This sequence belongs to the 5'-AMP-activated protein kinase gamma subunit family. AMPK is a heterotrimer of an alpha catalytic subunit (PRKAA1 or PRKAA2), a beta (PRKAB1 or PRKAB2) and a gamma non-catalytic subunits (PRKAG1, PRKAG2 or PRKAG3). Interacts with FNIP1 and FNIP2. Phosphorylated by ULK1; leading to negatively regulate AMPK activity and suggesting the existence of a regulatory feedback loop between ULK1 and AMPK. Post-translationally, glycosylated; O-GlcNAcylated by OGT, promoting the AMP-activated protein kinase (AMPK) activity. As to expression, muscle.

AMP/ATP-binding subunit of AMP-activated protein kinase (AMPK), an energy sensor protein kinase that plays a key role in regulating cellular energy metabolism. In response to reduction of intracellular ATP levels, AMPK activates energy-producing pathways and inhibits energy-consuming processes: inhibits protein, carbohydrate and lipid biosynthesis, as well as cell growth and proliferation. AMPK acts via direct phosphorylation of metabolic enzymes, and by longer-term effects via phosphorylation of transcription regulators. AMPK also acts as a regulator of cellular polarity by remodeling the actin cytoskeleton; probably by indirectly activating myosin. The AMPK gamma3 subunit is a non-catalytic subunit with a regulatory role in muscle energy metabolism. It mediates binding to AMP, ADP and ATP, leading to AMPK activation or inhibition: AMP-binding results in allosteric activation of alpha catalytic subunit (PRKAA1 or PRKAA2) both by inducing phosphorylation and preventing dephosphorylation of catalytic subunits. ADP also stimulates phosphorylation, without stimulating already phosphorylated catalytic subunit. ATP promotes dephosphorylation of catalytic subunit, rendering the AMPK enzyme inactive. The polypeptide is 5'-AMP-activated protein kinase subunit gamma-3 (PRKAG3) (Sus scrofa (Pig)).